Reading from the N-terminus, the 443-residue chain is ATP-dependent protease ATPase subunit HslU (443 aa).

Residues Ile-18, 60-65, Asp-256, Glu-321, and Arg-393 contribute to the ATP site; that span reads GVGKTE.

Belongs to the ClpX chaperone family. HslU subfamily. A double ring-shaped homohexamer of HslV is capped on each side by a ring-shaped HslU homohexamer. The assembly of the HslU/HslV complex is dependent on binding of ATP.

It is found in the cytoplasm. ATPase subunit of a proteasome-like degradation complex; this subunit has chaperone activity. The binding of ATP and its subsequent hydrolysis by HslU are essential for unfolding of protein substrates subsequently hydrolyzed by HslV. HslU recognizes the N-terminal part of its protein substrates and unfolds these before they are guided to HslV for hydrolysis. This Vibrio cholerae serotype O1 (strain ATCC 39541 / Classical Ogawa 395 / O395) protein is ATP-dependent protease ATPase subunit HslU.